A 238-amino-acid polypeptide reads, in one-letter code: Ribonuclease PH (238 aa).

Phosphate-binding positions include Arg86 and 124–126; that span reads GTR.

It belongs to the RNase PH family. Homohexameric ring arranged as a trimer of dimers.

The enzyme catalyses tRNA(n+1) + phosphate = tRNA(n) + a ribonucleoside 5'-diphosphate. In terms of biological role, phosphorolytic 3'-5' exoribonuclease that plays an important role in tRNA 3'-end maturation. Removes nucleotide residues following the 3'-CCA terminus of tRNAs; can also add nucleotides to the ends of RNA molecules by using nucleoside diphosphates as substrates, but this may not be physiologically important. Probably plays a role in initiation of 16S rRNA degradation (leading to ribosome degradation) during starvation. The sequence is that of Ribonuclease PH from Histophilus somni (strain 129Pt) (Haemophilus somnus).